We begin with the raw amino-acid sequence, 477 residues long: Bifunctional protein HldE (477 aa).

A ribokinase region spans residues 1–320 (MKDSLPAFEK…SLSDTHHSET (320 aa)). An ATP-binding site is contributed by 195 to 198 (NLHE). Asp264 is an active-site residue. Positions 346–477 (MTNGCFDILH…KIIENIMANQ (132 aa)) are cytidylyltransferase.

It in the N-terminal section; belongs to the carbohydrate kinase PfkB family. The protein in the C-terminal section; belongs to the cytidylyltransferase family. As to quaternary structure, homodimer.

It catalyses the reaction D-glycero-beta-D-manno-heptose 7-phosphate + ATP = D-glycero-beta-D-manno-heptose 1,7-bisphosphate + ADP + H(+). The catalysed reaction is D-glycero-beta-D-manno-heptose 1-phosphate + ATP + H(+) = ADP-D-glycero-beta-D-manno-heptose + diphosphate. It participates in nucleotide-sugar biosynthesis; ADP-L-glycero-beta-D-manno-heptose biosynthesis; ADP-L-glycero-beta-D-manno-heptose from D-glycero-beta-D-manno-heptose 7-phosphate: step 1/4. It functions in the pathway nucleotide-sugar biosynthesis; ADP-L-glycero-beta-D-manno-heptose biosynthesis; ADP-L-glycero-beta-D-manno-heptose from D-glycero-beta-D-manno-heptose 7-phosphate: step 3/4. Functionally, catalyzes the phosphorylation of D-glycero-D-manno-heptose 7-phosphate at the C-1 position to selectively form D-glycero-beta-D-manno-heptose-1,7-bisphosphate. Its function is as follows. Catalyzes the ADP transfer from ATP to D-glycero-beta-D-manno-heptose 1-phosphate, yielding ADP-D-glycero-beta-D-manno-heptose. The sequence is that of Bifunctional protein HldE from Shewanella piezotolerans (strain WP3 / JCM 13877).